Consider the following 717-residue polypeptide: uncharacterized protein (717 aa).

This sequence belongs to the asfivirus C717R family.

It is found in the virion. This is an uncharacterized protein from African swine fever virus (isolate Tick/Malawi/Lil 20-1/1983) (ASFV).